An 83-amino-acid polypeptide reads, in one-letter code: Cytochrome b559 subunit alpha (83 aa).

The chain crosses the membrane as a helical span at residues 21–35 (VIHSITIPSLFIAGW). H23 serves as a coordination point for heme.

The protein belongs to the PsbE/PsbF family. As to quaternary structure, heterodimer of an alpha subunit and a beta subunit. PSII is composed of 1 copy each of membrane proteins PsbA, PsbB, PsbC, PsbD, PsbE, PsbF, PsbH, PsbI, PsbJ, PsbK, PsbL, PsbM, PsbT, PsbX, PsbY, PsbZ, Psb30/Ycf12, at least 3 peripheral proteins of the oxygen-evolving complex and a large number of cofactors. It forms dimeric complexes. It depends on heme b as a cofactor.

The protein resides in the plastid. It localises to the chloroplast thylakoid membrane. Functionally, this b-type cytochrome is tightly associated with the reaction center of photosystem II (PSII). PSII is a light-driven water:plastoquinone oxidoreductase that uses light energy to abstract electrons from H(2)O, generating O(2) and a proton gradient subsequently used for ATP formation. It consists of a core antenna complex that captures photons, and an electron transfer chain that converts photonic excitation into a charge separation. The polypeptide is Cytochrome b559 subunit alpha (Tupiella akineta (Green alga)).